Here is a 706-residue protein sequence, read N- to C-terminus: Gamma-adducin (706 aa).

Positions 1–10 are enriched in polar residues; the sequence is MSSDASQGVI. Residues 1 to 20 are disordered; the sequence is MSSDASQGVITTPPPPSMPH. The residue at position 2 (Ser2) is an N-acetylserine. A phosphoserine mark is found at Ser42, Ser64, Ser402, Ser414, Ser423, Ser442, and Ser461. Disordered stretches follow at residues 471 to 497, 535 to 555, 575 to 610, and 666 to 706; these read AEDS…LNTN, PSTM…NPFS, GLED…KLEE, and EKIE…KVEA. Lys484 is covalently cross-linked (Glycyl lysine isopeptide (Lys-Gly) (interchain with G-Cter in SUMO2)). Phosphoserine occurs at positions 585, 590, 673, 677, 679, 681, and 683. The span at 589–602 shows a compositional bias: low complexity; it reads SSVSQIQSQTQSPQ. The span at 682–706 shows a compositional bias: basic residues; sequence PSKKKKKFRTPSFLKKNKKKEKVEA. The tract at residues 684–701 is interaction with calmodulin; that stretch reads KKKKKFRTPSFLKKNKKK.

This sequence belongs to the aldolase class II family. Adducin subfamily. In terms of assembly, heterodimer of an alpha and a gamma subunit. Sumoylated. In terms of processing, proteolytically cleaved by asparagine endopeptidase (AEP) into 2 fragments. Overexpression of the 1-357 fragment induces neuronal apoptosis, and overexpression of either 1-357 or 358-706 fragment increases the degeneration of dendritic spines. Overexpression of the 1-357 fragment impairs neurite outgrowth by downregulating the expression of Rac2, and induces synaptic dysfunction and cognitive impairments in tau P301S transgenic mice, a mouse model for Alzheimer disease (AD). As to expression, ubiquitously expressed. In terms of tissue distribution, cleavage fragment 1-357 is abundantly expressed in the brain of patients with Alzheimer disease (AD), but hardly detectable in age-matched control individuals (at protein level).

Its subcellular location is the cytoplasm. The protein localises to the cytoskeleton. The protein resides in the cell membrane. Membrane-cytoskeleton-associated protein that promotes the assembly of the spectrin-actin network. Plays a role in actin filament capping. Binds to calmodulin. Involved in myogenic reactivity of the renal afferent arteriole (Af-art), renal interlobular arteries and middle cerebral artery (MCA) to increased perfusion pressure. Involved in regulation of potassium channels in the vascular smooth muscle cells (VSMCs) of the Af-art and MCA ex vivo. Involved in regulation of glomerular capillary pressure, glomerular filtration rate (GFR) and glomerular nephrin expression in response to hypertension. Involved in renal blood flow (RBF) autoregulation. Plays a role in podocyte structure and function. Regulates globular monomer actin (G-actin) and filamentous polymer actin (F-actin) ratios in the primary podocytes affecting actin cytoskeleton organization. Regulates expression of synaptopodin, RhoA, Rac1 and CDC42 in the renal cortex and the primary podocytes. Regulates expression of nephrin in the glomeruli and in the primary podocytes, expression of nephrin and podocinin in the renal cortex, and expression of focal adhesion proteins integrin alpha-3 and integrin beta-1 in the glomeruli. Involved in cell migration and cell adhesion of podocytes, and in podocyte foot process effacement. Regulates expression of profibrotics markers MMP2, MMP9, TGF beta-1, tubular tight junction protein E-cadherin, and mesenchymal markers vimentin and alpha-SMA. Promotes the growth of neurites. The chain is Gamma-adducin (ADD3) from Homo sapiens (Human).